The primary structure comprises 953 residues: UvrABC system protein A (953 aa).

Position 33 to 40 (33 to 40) interacts with ATP; it reads GLSGSGKS. ABC transporter domains follow at residues 320 to 599 and 619 to 949; these read WGST…EESI and GHDN…RYLK. Position 652–659 (652–659) interacts with ATP; sequence GVSGSGKS. Residues 752–778 form a C4-type zinc finger; sequence CEACQGDGLIKIEMHFLPDVYVKCDIC.

This sequence belongs to the ABC transporter superfamily. UvrA family. As to quaternary structure, forms a heterotetramer with UvrB during the search for lesions.

The protein localises to the cytoplasm. In terms of biological role, the UvrABC repair system catalyzes the recognition and processing of DNA lesions. UvrA is an ATPase and a DNA-binding protein. A damage recognition complex composed of 2 UvrA and 2 UvrB subunits scans DNA for abnormalities. When the presence of a lesion has been verified by UvrB, the UvrA molecules dissociate. The polypeptide is UvrABC system protein A (Rickettsia typhi (strain ATCC VR-144 / Wilmington)).